Consider the following 1744-residue polypeptide: Tensin-1 (1744 aa).

The segment at 15–55 (SPAVNYELPSPGQSITKQVDTPDATRSPRGGQAHRKASRSM) is disordered. The Phosphatase tensin-type domain occupies 58–230 (TAAMESSCEL…HYFSGLLSGS (173 aa)). The C2 tensin-type domain maps to 235–361 (NKPLFLHHVI…GKVEFVFSYG (127 aa)). Disordered regions lie at residues 467–505 (TLSV…SPEE), 569–589 (DELP…SSLD), 666–686 (AQEH…PAWL), 724–797 (PQAP…APSR), 934–956 (GSQQ…QLPH), 982–1077 (RVAG…PGLA), and 1156–1437 (VPSP…GSAV). A compositionally biased stretch (polar residues) spans 468–481 (LSVSSDSGNSTAST). Over residues 580–589 (GSLGTLSSLD) the composition is skewed to low complexity. Residues 728-753 (ARSTSSREAVQRGLNSWQQQGGSRPP) are compositionally biased toward polar residues. Residues 763 to 773 (SHSPSLSSCSP) are compositionally biased toward low complexity. Residues 774 to 783 (QPSPLQPMPP) show a composition bias toward pro residues. Composition is skewed to basic and acidic residues over residues 1004–1014 (TPSDSHYEKSS) and 1041–1054 (RPKE…KEAF). Residues 1060 to 1069 (ASPSSLTSGG) are compositionally biased toward polar residues. Composition is skewed to low complexity over residues 1156-1169 (VPSP…IHSV) and 1208-1220 (SAHS…SPSS). 3 stretches are compositionally biased toward polar residues: residues 1344-1355 (LSRQSSASGYQP), 1370-1380 (GTSTPHSSSPD), and 1405-1420 (ERSN…NGKA). Low complexity predominate over residues 1421-1435 (SSPLSSGMSSPSSGS). The SH2 domain occupies 1472–1581 (WYKPDISREQ…ALPCKLVIPD (110 aa)). The PTB domain occupies 1607–1743 (ACNVLFINSV…SRVMLGSGQK (137 aa)).

The protein belongs to the PTEN phosphatase protein family. Binds to actin filaments. Interacts with phosphotyrosine-containing proteins. In terms of processing, tyrosine phosphorylated. In terms of tissue distribution, heart, gizzard, lung and skeletal muscle.

It localises to the cell surface. The protein resides in the cell junction. It is found in the focal adhesion. Its subcellular location is the cytoplasm. The protein localises to the cytoskeleton. Its function is as follows. May act as a protein phosphatase and/or a lipid phosphatase. Involved in fibrillar adhesion formation. Plays a role in cell polarization and migration. May be involved in cartilage development and in linking signal transduction pathways to the cytoskeleton. This chain is Tensin-1 (TNS1), found in Gallus gallus (Chicken).